We begin with the raw amino-acid sequence, 561 residues long: Probable oligo-1,6-glucosidase 2 (561 aa).

Asp199 acts as the Nucleophile in catalysis. The Proton donor role is filled by Glu255.

This sequence belongs to the glycosyl hydrolase 13 family.

The protein localises to the cytoplasm. It catalyses the reaction Hydrolysis of (1-&gt;6)-alpha-D-glucosidic linkages in some oligosaccharides produced from starch and glycogen by alpha-amylase, and in isomaltose.. The chain is Probable oligo-1,6-glucosidase 2 (ycdG) from Bacillus subtilis (strain 168).